We begin with the raw amino-acid sequence, 712 residues long: Polyphosphate kinase (712 aa).

Position 49 (Asn49) interacts with ATP. Positions 398 and 428 each coordinate Mg(2+). The active-site Phosphohistidine intermediate is the His458. 3 residues coordinate ATP: Tyr491, Arg587, and His615.

It belongs to the polyphosphate kinase 1 (PPK1) family. The cofactor is Mg(2+). In terms of processing, an intermediate of this reaction is the autophosphorylated ppk in which a phosphate is covalently linked to a histidine residue through a N-P bond.

The enzyme catalyses [phosphate](n) + ATP = [phosphate](n+1) + ADP. In terms of biological role, catalyzes the reversible transfer of the terminal phosphate of ATP to form a long-chain polyphosphate (polyP). This is Polyphosphate kinase from Prochlorococcus marinus (strain MIT 9313).